We begin with the raw amino-acid sequence, 120 residues long: Putative pterin-4-alpha-carbinolamine dehydratase (120 aa).

This sequence belongs to the pterin-4-alpha-carbinolamine dehydratase family.

The enzyme catalyses (4aS,6R)-4a-hydroxy-L-erythro-5,6,7,8-tetrahydrobiopterin = (6R)-L-erythro-6,7-dihydrobiopterin + H2O. The polypeptide is Putative pterin-4-alpha-carbinolamine dehydratase (Bdellovibrio bacteriovorus (strain ATCC 15356 / DSM 50701 / NCIMB 9529 / HD100)).